A 118-amino-acid polypeptide reads, in one-letter code: NADH-quinone oxidoreductase subunit A (118 aa).

Transmembrane regions (helical) follow at residues tyrosine 5–valine 25, phenylalanine 61–alanine 81, and phenylalanine 90–tryptophan 110.

Belongs to the complex I subunit 3 family. NDH-1 is composed of 14 different subunits. Subunits NuoA, H, J, K, L, M, N constitute the membrane sector of the complex.

The protein resides in the cell membrane. The catalysed reaction is a quinone + NADH + 5 H(+)(in) = a quinol + NAD(+) + 4 H(+)(out). Functionally, NDH-1 shuttles electrons from NADH, via FMN and iron-sulfur (Fe-S) centers, to quinones in the respiratory chain. The immediate electron acceptor for the enzyme in this species is believed to be a menaquinone. Couples the redox reaction to proton translocation (for every two electrons transferred, four hydrogen ions are translocated across the cytoplasmic membrane), and thus conserves the redox energy in a proton gradient. In Heliobacterium modesticaldum (strain ATCC 51547 / Ice1), this protein is NADH-quinone oxidoreductase subunit A.